Here is an 82-residue protein sequence, read N- to C-terminus: QTGKDATIVELTNDNDGLGQYNFAYRTSDGIARQEQGALKNAGSENEALEVQGSYTYKGVDGKDYTVTFVANENGYQPRVQS.

A Pyrrolidone carboxylic acid modification is found at Q1. The Chitin-binding type R&amp;R domain maps to 18 to 82 (LGQYNFAYRT…ENGYQPRVQS (65 aa)).

In terms of biological role, component of the soft endocuticle of migratory locust. In Locusta migratoria (Migratory locust), this protein is Endocuticle structural glycoprotein ABD-5.